The sequence spans 371 residues: Dual-specificity RNA methyltransferase RlmN (371 aa).

Catalysis depends on Glu114, which acts as the Proton acceptor. In terms of domain architecture, Radical SAM core spans 120 to 352 (EEDHFTLCVS…VMTRQSKGAD (233 aa)). Cys127 and Cys357 are joined by a disulfide. Positions 134, 138, and 141 each coordinate [4Fe-4S] cluster. S-adenosyl-L-methionine-binding positions include 183–184 (GE), Ser216, 238–240 (SLN), and Asn314. Cys357 serves as the catalytic S-methylcysteine intermediate.

It belongs to the radical SAM superfamily. RlmN family. The cofactor is [4Fe-4S] cluster.

The protein resides in the cytoplasm. It carries out the reaction adenosine(2503) in 23S rRNA + 2 reduced [2Fe-2S]-[ferredoxin] + 2 S-adenosyl-L-methionine = 2-methyladenosine(2503) in 23S rRNA + 5'-deoxyadenosine + L-methionine + 2 oxidized [2Fe-2S]-[ferredoxin] + S-adenosyl-L-homocysteine. The enzyme catalyses adenosine(37) in tRNA + 2 reduced [2Fe-2S]-[ferredoxin] + 2 S-adenosyl-L-methionine = 2-methyladenosine(37) in tRNA + 5'-deoxyadenosine + L-methionine + 2 oxidized [2Fe-2S]-[ferredoxin] + S-adenosyl-L-homocysteine. In terms of biological role, specifically methylates position 2 of adenine 2503 in 23S rRNA and position 2 of adenine 37 in tRNAs. m2A2503 modification seems to play a crucial role in the proofreading step occurring at the peptidyl transferase center and thus would serve to optimize ribosomal fidelity. The protein is Dual-specificity RNA methyltransferase RlmN of Desulfosudis oleivorans (strain DSM 6200 / JCM 39069 / Hxd3) (Desulfococcus oleovorans).